The following is a 303-amino-acid chain: Sulfate adenylyltransferase subunit 2 (303 aa).

The disordered stretch occupies residues 281-303; the sequence is RQGRVIDHDSSGSMEKKKQEGYF.

This sequence belongs to the PAPS reductase family. CysD subfamily. Heterodimer composed of CysD, the smaller subunit, and CysN.

The catalysed reaction is sulfate + ATP + H(+) = adenosine 5'-phosphosulfate + diphosphate. The protein operates within sulfur metabolism; hydrogen sulfide biosynthesis; sulfite from sulfate: step 1/3. Functionally, with CysN forms the ATP sulfurylase (ATPS) that catalyzes the adenylation of sulfate producing adenosine 5'-phosphosulfate (APS) and diphosphate, the first enzymatic step in sulfur assimilation pathway. APS synthesis involves the formation of a high-energy phosphoric-sulfuric acid anhydride bond driven by GTP hydrolysis by CysN coupled to ATP hydrolysis by CysD. The polypeptide is Sulfate adenylyltransferase subunit 2 (Saccharophagus degradans (strain 2-40 / ATCC 43961 / DSM 17024)).